The primary structure comprises 326 residues: Target of rapamycin complex subunit LST8 (326 aa).

M1 bears the N-acetylmethionine mark. 5 WD repeats span residues 1-37, 40-80, 83-122, 126-165, and 168-207; these read MNTT…CTRT, HQDS…PIIS, GVSK…LQCQ, QVNA…NEQL, and EPEF…GDEV. Residue T51 is modified to Phosphothreonine. Residue K86 forms a Glycyl lysine isopeptide (Lys-Gly) (interchain with G-Cter in SUMO3) linkage. Glycyl lysine isopeptide (Lys-Gly) (interchain with G-Cter in SUMO3) cross-links involve residues K215, K245, and K261. A WD 6 repeat occupies 218-257; sequence AHTRYALQCRFSPDSTLLATCSADQTCKIWRTSNFSLMTE. One copy of the WD 7 repeat lies at 268–309; it reads SSRGWMWGCAFSGDSQYIVTASSDNLARLWCVETGEIKREYG. K305 participates in a covalent cross-link: Glycyl lysine isopeptide (Lys-Gly) (interchain with G-Cter in SUMO3); alternate. Glycyl lysine isopeptide (Lys-Gly) (interchain with G-Cter in ubiquitin); alternate cross-links involve residues K305 and K313. K313 participates in a covalent cross-link: Glycyl lysine isopeptide (Lys-Gly) (interchain with G-Cter in SUMO1); alternate.

This sequence belongs to the WD repeat LST8 family. Part of the mechanistic target of rapamycin complex 1 (mTORC1) which contains MTOR, MLST8 and RPTOR. mTORC1 associates with AKT1S1/PRAS40, which inhibits its activity. mTORC1 binds to and is inhibited by FKBP12-rapamycin. Within mTORC1, interacts directly with MTOR and RPTOR. Component of the mechanistic target of rapamycin complex 2 (mTORC2), consisting in two heterotretramers composed of MTOR, MLST8, RICTOR and MAPKAP1/SIN1. Contrary to mTORC1, mTORC2 does not bind to and is not sensitive to FKBP12-rapamycin. mTORC1 and mTORC2 associate with DEPTOR, which regulates their activity. Interacts with RHEB. Interacts with MEAK7. Interacts with SIK3. Interacts with SLC38A7; this interaction promotes the recruitment of mTORC1 to the lysosome and its subsequent activation. Post-translationally, phosphorylation at Thr-51 by CDK1 promotes ubiquitination by the SCF(FBXW7) complex, followed by degradation. In terms of processing, ubiquitination by the SCF(FBXW7) and SCF(FBXW11) complexes following phosphorylation at Thr-51 by CDK1, leads to its degradation by the proteasome. Ubiquitination at Lys-305 and Lys-313 by TRAF2 via 'Lys-63'-linked polyubiquitin chains inhibits formation of the mTORC2 complex, while promoting formation of the mTORC1 complex: ubiquitination disrupts the interaction between MLST8 and MAPKAP1/SIN1 to favor mTORC1 assembly. Deubiquitination at Lys-305 and Lys-313 by OTUD7B promotes MLST8 interaction with MAPKAP1/SIN1, facilitating mTORC2 assembly. Sumoylation with SUMO1, SUMO2 and SUMO3 promotes assembly of both mTORC1 and mTORC2 complexes. As to expression, expressed at highest levels in the brain and testis, followed by lung, heart, kidney, skeletal muscle, spleen and liver. Also expressed in epididymal, abdominal and brown fat, small intestine and pancreas.

The protein resides in the lysosome membrane. Its subcellular location is the cytoplasm. Functionally, subunit of both mTORC1 and mTORC2, which regulates cell growth and survival in response to nutrient and hormonal signals. mTORC1 is activated in response to growth factors or amino acids. In response to nutrients, mTORC1 is recruited to the lysosome membrane and promotes protein, lipid and nucleotide synthesis by phosphorylating several substrates, such as ribosomal protein S6 kinase (RPS6KB1 and RPS6KB2) and EIF4EBP1 (4E-BP1). In the same time, it inhibits catabolic pathways by phosphorylating the autophagy initiation components ULK1 and ATG13, as well as transcription factor TFEB, a master regulators of lysosomal biogenesis and autophagy. The mTORC1 complex is inhibited in response to starvation and amino acid depletion. Within mTORC1, MLST8 interacts directly with MTOR and enhances its kinase activity. In nutrient-poor conditions, stabilizes the MTOR-RPTOR interaction and favors RPTOR-mediated inhibition of MTOR activity. As part of the mTORC2 complex, transduces signals from growth factors to pathways involved in proliferation, cytoskeletal organization, lipogenesis and anabolic output. mTORC2 is also activated by growth factors, but seems to be nutrient-insensitive. In response to growth factors, mTORC2 phosphorylates and activates AGC protein kinase family members, including AKT (AKT1, AKT2 and AKT3), PKC (PRKCA, PRKCB and PRKCE) and SGK1. mTORC2 functions upstream of Rho GTPases to regulate the actin cytoskeleton, probably by activating one or more Rho-type guanine nucleotide exchange factors. mTORC2 promotes the serum-induced formation of stress-fibers or F-actin. mTORC2 plays a critical role in AKT1 activation by mediating phosphorylation of different sites depending on the context, such as 'Thr-450', 'Ser-473', 'Ser-477' or 'Thr-479', facilitating the phosphorylation of the activation loop of AKT1 on 'Thr-308' by PDPK1/PDK1 which is a prerequisite for full activation. mTORC2 regulates the phosphorylation of SGK1 at 'Ser-422'. mTORC2 also modulates the phosphorylation of PRKCA on 'Ser-657'. Within mTORC2, MLST8 acts as a bridge between MAPKAP1/SIN1 and MTOR. This chain is Target of rapamycin complex subunit LST8, found in Rattus norvegicus (Rat).